Consider the following 231-residue polypeptide: Ribonuclease 3 (231 aa).

Residues 6–135 enclose the RNase III domain; that stretch reads AAMLKERFGI…FVGALYLDQG (130 aa). Residue E48 coordinates Mg(2+). D52 is an active-site residue. Mg(2+)-binding residues include D121 and E124. E124 is an active-site residue. The region spanning 161-230 is the DRBM domain; that stretch reads DYKTTLQEYL…ARQAYSQLQQ (70 aa). Residues 209 to 231 form a disordered region; that stretch reads WGHSKKEAEQSAARQAYSQLQQK. Residues 220 to 231 are compositionally biased toward polar residues; the sequence is AARQAYSQLQQK.

Belongs to the ribonuclease III family. In terms of assembly, homodimer. It depends on Mg(2+) as a cofactor.

It localises to the cytoplasm. The catalysed reaction is Endonucleolytic cleavage to 5'-phosphomonoester.. Digests double-stranded RNA. Involved in the processing of primary rRNA transcript to yield the immediate precursors to the large and small rRNAs (23S and 16S). Processes some mRNAs, and tRNAs when they are encoded in the rRNA operon. Processes pre-crRNA and tracrRNA of type II CRISPR loci if present in the organism. The sequence is that of Ribonuclease 3 from Lactiplantibacillus plantarum (strain ATCC BAA-793 / NCIMB 8826 / WCFS1) (Lactobacillus plantarum).